A 198-amino-acid polypeptide reads, in one-letter code: Guanylyl cyclase-activating protein 2 (198 aa).

The N-myristoyl glycine moiety is linked to residue Gly-2. 4 EF-hand domains span residues 16–51, 52–87, 88–123, and 139–174; these read DVAE…QDNH, EAAE…VLRG, KLEH…IYKL, and TPEE…DKWV. Positions 65, 67, 69, 71, 76, 101, 103, 105, 107, 112, 152, 154, 156, 158, and 163 each coordinate Ca(2+).

In terms of assembly, undergoes dimerization at low calcium ions concentration, while the presence of calcium ions inhibits its dimerization. Dimerization correlates with its ability to activate GC. In terms of tissue distribution, retina and pineal gland.

In terms of biological role, stimulates synthesis of cGMP in photoreceptors. Thought to mediate Ca(2+)-sensitive regulation of retinal guanylyl cyclase (GC), a key event in recovery of the dark state of rod photoreceptors following light exposure. This chain is Guanylyl cyclase-activating protein 2 (GUCA1B), found in Gallus gallus (Chicken).